Here is a 329-residue protein sequence, read N- to C-terminus: Ankyrin repeat and SOCS box protein 5 (329 aa).

ANK repeat units lie at residues 69-98 (ADRS…NVNA), 102-131 (DHVT…NVNA), 135-164 (DGVT…KPQL), 167-196 (CLPS…DVDQ), 200-229 (HLGT…DVQK), and 232-261 (YWDT…DINA). The SOCS box domain maps to 278–329 (LVERLLLQHEATPSSLCQLCRLCIRNYIGRPRLHLIPQLQLPTLLQNFLQYR).

This sequence belongs to the ankyrin SOCS box (ASB) family.

It participates in protein modification; protein ubiquitination. In terms of biological role, may be a substrate-recognition component of a SCF-like ECS (Elongin-Cullin-SOCS-box protein) E3 ubiquitin-protein ligase complex which mediates the ubiquitination and subsequent proteasomal degradation of target proteins. May play a role in the initiation of arteriogenesis. This is Ankyrin repeat and SOCS box protein 5 (ASB5) from Bos taurus (Bovine).